The sequence spans 242 residues: Zinc import ATP-binding protein ZnuC (242 aa).

The ABC transporter domain occupies 24 to 241; it reads INVKNLSFFY…EKFLKMFSSY (218 aa). ATP is bound at residue 56–63; sequence GPNGGGKT.

Belongs to the ABC transporter superfamily. Zinc importer (TC 3.A.1.15.5) family. In terms of assembly, the complex is composed of two ATP-binding proteins (ZnuC), two transmembrane proteins (ZnuB) and a solute-binding protein (ZnuA).

It localises to the cell inner membrane. It catalyses the reaction Zn(2+)(out) + ATP(in) + H2O(in) = Zn(2+)(in) + ADP(in) + phosphate(in) + H(+)(in). Its function is as follows. Part of the ABC transporter complex ZnuABC involved in zinc import. Responsible for energy coupling to the transport system. The chain is Zinc import ATP-binding protein ZnuC from Ehrlichia canis (strain Jake).